The following is a 582-amino-acid chain: Trans-ocimene synthase, chloroplastic (582 aa).

Residues 1–35 (MSLIIQSLPHWSRIPPRPPQLSQFQNSSRPKPLIQ) constitute a chloroplast transit peptide. (2E)-geranyl diphosphate is bound by residues Arg-296, Asp-333, Asp-337, Arg-474, and Asp-477. Asp-333 and Asp-337 together coordinate Mg(2+). Residues 333–337 (DDIYD) carry the DDXXD motif motif. Mg(2+) is bound by residues Asp-477, Thr-481, and Glu-485.

The protein belongs to the terpene synthase family. Tpsb subfamily. Monomer. Requires Mg(2+) as cofactor. It depends on Mn(2+) as a cofactor. In terms of tissue distribution, expressed in male and female leaves. Barely detectable in fruits and shoots.

It is found in the plastid. The protein resides in the chloroplast. The enzyme catalyses (2E)-geranyl diphosphate = (E)-beta-ocimene + diphosphate. It functions in the pathway secondary metabolite biosynthesis; terpenoid biosynthesis. Functionally, monoterpene synthase (TPS) involved in the biosynthesis of monoterpene natural products used by traditional Chinese medicine to treat headache, inflammation and intoxication. Catalyzes the conversion of (2E)-geranyl diphosphate (GPP) into (E)-beta-ocimene. The chain is Trans-ocimene synthase, chloroplastic from Litsea cubeba (Aromatic litsea).